The sequence spans 220 residues: Ribosomal RNA large subunit methyltransferase E (220 aa).

5 residues coordinate S-adenosyl-L-methionine: Gly60, Trp62, Asp92, Asp108, and Asp133. The active-site Proton acceptor is Lys173. The tract at residues 197 to 220 (RKPKASRDKSSETFILGRQLKQPR) is disordered.

Belongs to the class I-like SAM-binding methyltransferase superfamily. RNA methyltransferase RlmE family.

It is found in the cytoplasm. It catalyses the reaction uridine(2552) in 23S rRNA + S-adenosyl-L-methionine = 2'-O-methyluridine(2552) in 23S rRNA + S-adenosyl-L-homocysteine + H(+). In terms of biological role, specifically methylates the uridine in position 2552 of 23S rRNA at the 2'-O position of the ribose in the fully assembled 50S ribosomal subunit. The sequence is that of Ribosomal RNA large subunit methyltransferase E from Burkholderia ambifaria (strain MC40-6).